Consider the following 427-residue polypeptide: Histidine--tRNA ligase (427 aa).

The protein belongs to the class-II aminoacyl-tRNA synthetase family. In terms of assembly, homodimer.

It localises to the cytoplasm. The enzyme catalyses tRNA(His) + L-histidine + ATP = L-histidyl-tRNA(His) + AMP + diphosphate + H(+). This chain is Histidine--tRNA ligase, found in Deinococcus radiodurans (strain ATCC 13939 / DSM 20539 / JCM 16871 / CCUG 27074 / LMG 4051 / NBRC 15346 / NCIMB 9279 / VKM B-1422 / R1).